Here is a 506-residue protein sequence, read N- to C-terminus: Protein MGF 505-4R (506 aa).

This sequence belongs to the asfivirus MGF 505 family.

Plays a role in virus cell tropism, and may be required for efficient virus replication in macrophages. The protein is Protein MGF 505-4R of Ornithodoros (relapsing fever ticks).